A 197-amino-acid chain; its full sequence is GTP cyclohydrolase-2 (197 aa).

49–53 provides a ligand contact to GTP; it reads RVHSE. Positions 54, 65, and 67 each coordinate Zn(2+). Residues Q70, 92–94, and T114 contribute to the GTP site; that span reads EGR. The active-site Proton acceptor is the D126. The active-site Nucleophile is R128. Residues T149 and K154 each coordinate GTP.

The protein belongs to the GTP cyclohydrolase II family. As to quaternary structure, homodimer. The cofactor is Zn(2+).

The enzyme catalyses GTP + 4 H2O = 2,5-diamino-6-hydroxy-4-(5-phosphoribosylamino)-pyrimidine + formate + 2 phosphate + 3 H(+). Its pathway is cofactor biosynthesis; riboflavin biosynthesis; 5-amino-6-(D-ribitylamino)uracil from GTP: step 1/4. Functionally, catalyzes the conversion of GTP to 2,5-diamino-6-ribosylamino-4(3H)-pyrimidinone 5'-phosphate (DARP), formate and pyrophosphate. This is GTP cyclohydrolase-2 from Cronobacter sakazakii (strain ATCC BAA-894) (Enterobacter sakazakii).